The sequence spans 80 residues: Acyl carrier protein (80 aa).

The 76-residue stretch at 4–79 folds into the Carrier domain; that stretch reads EEIKDKVFDI…QAIDYIVNAK (76 aa). Residue Ser-39 is modified to O-(pantetheine 4'-phosphoryl)serine.

It belongs to the acyl carrier protein (ACP) family. 4'-phosphopantetheine is transferred from CoA to a specific serine of apo-ACP by AcpS. This modification is essential for activity because fatty acids are bound in thioester linkage to the sulfhydryl of the prosthetic group.

Its subcellular location is the cytoplasm. The protein operates within lipid metabolism; fatty acid biosynthesis. Its function is as follows. Carrier of the growing fatty acid chain in fatty acid biosynthesis. The protein is Acyl carrier protein of Prosthecochloris aestuarii (strain DSM 271 / SK 413).